The sequence spans 516 residues: AMP phosphorylase (516 aa).

Residues G169, 195 to 200 (SRAITG), and T204 contribute to the AMP site. D257 (proton donor) is an active-site residue. The AMP site is built by S265 and K289.

This sequence belongs to the thymidine/pyrimidine-nucleoside phosphorylase family. Type 2 subfamily.

The catalysed reaction is AMP + phosphate = alpha-D-ribose 1,5-bisphosphate + adenine. It carries out the reaction CMP + phosphate = cytosine + alpha-D-ribose 1,5-bisphosphate. It catalyses the reaction UMP + phosphate = alpha-D-ribose 1,5-bisphosphate + uracil. Functionally, catalyzes the conversion of AMP and phosphate to adenine and ribose 1,5-bisphosphate (R15P). Exhibits phosphorylase activity toward CMP and UMP in addition to AMP. Functions in an archaeal AMP degradation pathway, together with R15P isomerase and RubisCO. The protein is AMP phosphorylase of Methanospirillum hungatei JF-1 (strain ATCC 27890 / DSM 864 / NBRC 100397 / JF-1).